Consider the following 290-residue polypeptide: ATP synthase gamma chain (290 aa).

This sequence belongs to the ATPase gamma chain family. F-type ATPases have 2 components, CF(1) - the catalytic core - and CF(0) - the membrane proton channel. CF(1) has five subunits: alpha(3), beta(3), gamma(1), delta(1), epsilon(1). CF(0) has three main subunits: a, b and c.

It is found in the cell inner membrane. Produces ATP from ADP in the presence of a proton gradient across the membrane. The gamma chain is believed to be important in regulating ATPase activity and the flow of protons through the CF(0) complex. The chain is ATP synthase gamma chain from Bacteroides fragilis (strain ATCC 25285 / DSM 2151 / CCUG 4856 / JCM 11019 / LMG 10263 / NCTC 9343 / Onslow / VPI 2553 / EN-2).